We begin with the raw amino-acid sequence, 915 residues long: Nitrate reductase [NADH] (915 aa).

The interval 1–102 (MAASVEPRQP…PRDEGTADAW (102 aa)) is disordered. Residues 16–26 (APATAPTARAP) are compositionally biased toward low complexity. Residues 57 to 71 (AEEEEDDDDEDDEGH) show a composition bias toward acidic residues. A compositionally biased stretch (basic and acidic residues) spans 88–97 (PSTRDPRDEG). Residue C189 coordinates Mo-molybdopterin. In terms of domain architecture, Cytochrome b5 heme-binding spans 538 to 613 (DKQFTMSEVR…LDTYRIGELI (76 aa)). Heme-binding residues include H573 and H596. In terms of domain architecture, FAD-binding FR-type spans 654–767 (REKVPCRLVD…KGPLGHVEYT (114 aa)). FAD contacts are provided by residues 706-709 (RAYT), 723-727 (LVKVY), F728, F735, 740-742 (LMT), S791, and T794.

This sequence belongs to the nitrate reductase family. In terms of assembly, homodimer. FAD is required as a cofactor. The cofactor is heme. Mo-molybdopterin serves as cofactor.

It catalyses the reaction nitrite + NAD(+) + H2O = nitrate + NADH + H(+). Its function is as follows. Nitrate reductase is a key enzyme involved in the first step of nitrate assimilation in plants, fungi and bacteria. This chain is Nitrate reductase [NADH], found in Hordeum vulgare (Barley).